We begin with the raw amino-acid sequence, 466 residues long: MAVYTNPACRTNTSAFPGPYRPYSNPSRFSFNLDKFRPRTSAIKVPSICCTIAREMEKERSEREPDVLQRPDSFGRFGKFGGKYVPETLMYALTELESAFRSLSGDQVFQKELDGILKDYVGRESPLYFAERLTLHYKRPNGEGPEIYLKREDLNHTGAHKINNAVAQALLAKRLGKKRIIAETGAGQHGVATATVCARFGLQCVIYMGAQDMERQALNVFRMRLLGAEVRAVHSGTATLKDATSEAIRDWVTNVESTHYILGSVAGPHPYPMMVREFHAVIGKETRKQALEKWGGKPDVLVACVGGGSNAMGLFHEFVDDKDVRMIGVEAAGFGLDSGKHAATLTKGEVGVLHGAMSYLLQDDDGQIIEPHSISAGLDYPGVGPEHSFLKDIGRAEYYCCTDEEALEAFKRLSRLEGIIPALETSHALAFLEKLCPTLPNGTKVVLNCSGRGDKDVHTAIKHLQV.

Residue Lys-161 is modified to N6-(pyridoxal phosphate)lysine.

This sequence belongs to the TrpB family. In terms of assembly, tetramer of two alpha and two beta chains. The cofactor is pyridoxal 5'-phosphate.

The protein resides in the plastid. The protein localises to the chloroplast. It catalyses the reaction (1S,2R)-1-C-(indol-3-yl)glycerol 3-phosphate + L-serine = D-glyceraldehyde 3-phosphate + L-tryptophan + H2O. It functions in the pathway amino-acid biosynthesis; L-tryptophan biosynthesis; L-tryptophan from chorismate: step 5/5. In terms of biological role, the beta subunit is responsible for the synthesis of L-tryptophan from indole and L-serine. This chain is Tryptophan synthase beta chain 2, chloroplastic (TSB), found in Camptotheca acuminata (Happy tree).